Consider the following 422-residue polypeptide: Golgi-associated RAB2 interactor protein 2 (422 aa).

The segment at 353–404 (PVESEANTSKEMKDKTSEEKMPDFQSTALKAEESRSLRTESNTSVLSPHIKS) is disordered. The segment covering 360 to 374 (TSKEMKDKTSEEKMP) has biased composition (basic and acidic residues).

It belongs to the GARIN family. In terms of assembly, interacts with CALM1. Expressed in spermatozoa (at protein level).

The protein localises to the cell projection. It localises to the cilium. The protein resides in the flagellum. Seems to play a role in sperm motility. This is Golgi-associated RAB2 interactor protein 2 from Homo sapiens (Human).